The following is a 111-amino-acid chain: MTERITTPNADRTVQHHALPVDTTGLIFFAVFASSFVLYRRGSCFESYLFFSFPLSYFSNNRKKSRVQSDKQFFSVFKKNDPEQQHLYYAALMQFLTQLVESPTLFCVCTQ.

Residues 20–39 (PVDTTGLIFFAVFASSFVLY) form a helical membrane-spanning segment.

The protein resides in the membrane. This is an uncharacterized protein from Saccharomyces cerevisiae (strain ATCC 204508 / S288c) (Baker's yeast).